Consider the following 382-residue polypeptide: C-type lectin domain-containing protein 38 (382 aa).

Residues 1–40 are Cytoplasmic-facing; sequence MAIFYDDPLERLNQPIKTKSYRKKQVVQRVHVFIFDNWKL. The chain crosses the membrane as a helical span at residues 41–61; it reads ILLGILNLIFLIIAIVFAILF. The Extracellular segment spans residues 62-382; sequence FVGSADCAQL…FFLCKRAIDF (321 aa). The interval 97 to 116 is disordered; the sequence is NAITTTQGTPSNKTSTTTPS. The segment covering 100 to 116 has biased composition (low complexity); it reads TTTQGTPSNKTSTTTPS. N-linked (GlcNAc...) asparagine glycosylation is found at Asn-108 and Asn-189. C-type lectin domains lie at 129–250 and 264–377; these read VGTK…FVCE and YNKN…FLCK. Intrachain disulfides connect Cys-150/Cys-249, Cys-223/Cys-241, Cys-285/Cys-376, and Cys-348/Cys-368.

In terms of tissue distribution, expressed in ventral cord motor neurons and PLM touch neurons.

It localises to the membrane. In terms of biological role, involved in negative modulation of unc-40-mediated axon outgrowth. Required for proper presynaptic development in axons that have reached their targets. May function in concert with E3 ubiquitin-protein ligase rpm-1 in regulating axon outgrowth. The sequence is that of C-type lectin domain-containing protein 38 from Caenorhabditis elegans.